A 198-amino-acid chain; its full sequence is 3-isopropylmalate dehydratase small subunit (198 aa).

Belongs to the LeuD family. LeuD type 1 subfamily. Heterodimer of LeuC and LeuD.

It catalyses the reaction (2R,3S)-3-isopropylmalate = (2S)-2-isopropylmalate. It participates in amino-acid biosynthesis; L-leucine biosynthesis; L-leucine from 3-methyl-2-oxobutanoate: step 2/4. Functionally, catalyzes the isomerization between 2-isopropylmalate and 3-isopropylmalate, via the formation of 2-isopropylmaleate. The sequence is that of 3-isopropylmalate dehydratase small subunit from Colwellia psychrerythraea (strain 34H / ATCC BAA-681) (Vibrio psychroerythus).